The sequence spans 427 residues: Light-independent protochlorophyllide reductase subunit N (427 aa).

3 residues coordinate [4Fe-4S] cluster: cysteine 28, cysteine 53, and cysteine 114.

The protein belongs to the BchN/ChlN family. Protochlorophyllide reductase is composed of three subunits; BchL, BchN and BchB. Forms a heterotetramer of two BchB and two BchN subunits. [4Fe-4S] cluster is required as a cofactor.

It catalyses the reaction chlorophyllide a + oxidized 2[4Fe-4S]-[ferredoxin] + 2 ADP + 2 phosphate = protochlorophyllide a + reduced 2[4Fe-4S]-[ferredoxin] + 2 ATP + 2 H2O. It functions in the pathway porphyrin-containing compound metabolism; bacteriochlorophyll biosynthesis (light-independent). Its function is as follows. Component of the dark-operative protochlorophyllide reductase (DPOR) that uses Mg-ATP and reduced ferredoxin to reduce ring D of protochlorophyllide (Pchlide) to form chlorophyllide a (Chlide). This reaction is light-independent. The NB-protein (BchN-BchB) is the catalytic component of the complex. This is Light-independent protochlorophyllide reductase subunit N from Dinoroseobacter shibae (strain DSM 16493 / NCIMB 14021 / DFL 12).